The following is a 144-amino-acid chain: Large ribosomal subunit protein uL16 (144 aa).

A compositionally biased stretch (basic residues) spans 1-16 (MLQPKKTKFRRQQKGR). Residues 1–22 (MLQPKKTKFRRQQKGRMKGEAQ) form a disordered region.

The protein belongs to the universal ribosomal protein uL16 family. Part of the 50S ribosomal subunit.

Binds 23S rRNA and is also seen to make contacts with the A and possibly P site tRNAs. The sequence is that of Large ribosomal subunit protein uL16 from Parabacteroides distasonis (strain ATCC 8503 / DSM 20701 / CIP 104284 / JCM 5825 / NCTC 11152).